A 41-amino-acid polypeptide reads, in one-letter code: Photosystem I reaction center subunit IX (41 aa).

The chain crosses the membrane as a helical span at residues 7-27 (YLSTAPVLLTIWLTFTAGFII).

Belongs to the PsaJ family.

It is found in the plastid. The protein localises to the chloroplast thylakoid membrane. Its function is as follows. May help in the organization of the PsaE and PsaF subunits. This Phaeodactylum tricornutum (strain CCAP 1055/1) protein is Photosystem I reaction center subunit IX.